The following is a 235-amino-acid chain: Large ribosomal subunit protein uL1 (235 aa).

It belongs to the universal ribosomal protein uL1 family. As to quaternary structure, part of the 50S ribosomal subunit.

Functionally, binds directly to 23S rRNA. The L1 stalk is quite mobile in the ribosome, and is involved in E site tRNA release. Its function is as follows. Protein L1 is also a translational repressor protein, it controls the translation of the L11 operon by binding to its mRNA. This chain is Large ribosomal subunit protein uL1, found in Methylobacterium sp. (strain 4-46).